We begin with the raw amino-acid sequence, 131 residues long: Ribosomally synthesized cyclic peptide phomopsin precursor gigA (131 aa).

An N-terminal signal peptide occupies residues 1–18; sequence MQFTLIFFYATLAAFGLA. 5 propeptides span residues 19-38, 48-65, 75-92, 102-119, and 129-131; these read APSE…LDKR, ADLV…LDKR, ADMV…LDKR, ADMV…LAKR, and ADM.

In terms of processing, gigA is processed by several endopeptidases including kexin proteases to produce 2 identical copies of the nonaxapeptide Ile-Asn-Phe-Lys-Ile-Pro-Tyr-Thr-Gly, one copy of the nonaketide Ile-Gly-Phe-Lys-Leu-Pro-Tyr-Arg-Gly and one copy of the nonaketide Pro-Asn-Phe-Lys-Met-Pro-Tyr-Arg-Gly, that are further modified into phomapsins B, C and A, respectively. After being excised from the precursor peptide, the core peptides are cyclized and modified post-translationally by enzymes encoded within the gene cluster. Epichloecyclin biosynthesis requires only dimethylation of the side-chain amino group of the conserved lysine for completion.

Its pathway is mycotoxin biosynthesis. Functionally, ribosomally synthesized cyclic peptide phomopsin precursor; part of the gene cluster that mediates the biosynthesis of the epichloecyclins, a group of nonapeptides, with a likely cyclic structure and dimethylation of the conserved lysine. The gigA translated product contains 4 repeated peptide embedding the nonapeptide Ile-Asn-Phe-Lys-Ile-Pro-Tyr-Thr-Gly in repeats 1 and 2, Ile-Gly-Phe-Lys-Leu-Pro-Tyr-Arg-Gly in repeat 3, and Pro-Asn-Phe-Lys-Met-Pro-Tyr-Arg-Gly in repeat 4 that are converted into epichloecyclins B, C and A, respectively. Moreover, removal of the last Gly residue in epichloecyclins B and C leads to epichloecyclins D and E, respectively. The protein is Ribosomally synthesized cyclic peptide phomopsin precursor gigA (nc25) of Epichloe festucae (strain Fl1).